The primary structure comprises 235 residues: Aspartate/glutamate leucyltransferase (235 aa).

It belongs to the R-transferase family. Bpt subfamily.

It localises to the cytoplasm. It carries out the reaction N-terminal L-glutamyl-[protein] + L-leucyl-tRNA(Leu) = N-terminal L-leucyl-L-glutamyl-[protein] + tRNA(Leu) + H(+). The catalysed reaction is N-terminal L-aspartyl-[protein] + L-leucyl-tRNA(Leu) = N-terminal L-leucyl-L-aspartyl-[protein] + tRNA(Leu) + H(+). Functionally, functions in the N-end rule pathway of protein degradation where it conjugates Leu from its aminoacyl-tRNA to the N-termini of proteins containing an N-terminal aspartate or glutamate. This Pseudomonas fluorescens (strain SBW25) protein is Aspartate/glutamate leucyltransferase.